The following is a 75-amino-acid chain: MARYFRRRKFCRFTAEGIQEIDYKDIAMLKNYITENGKIVPSRITGTRAKFQRQLSRAIKKARYLALLPYTDQHH.

This sequence belongs to the bacterial ribosomal protein bS18 family. Part of the 30S ribosomal subunit. Forms a tight heterodimer with protein bS6.

Binds as a heterodimer with protein bS6 to the central domain of the 16S rRNA, where it helps stabilize the platform of the 30S subunit. This Buchnera aphidicola subsp. Schizaphis graminum (strain Sg) protein is Small ribosomal subunit protein bS18.